A 215-amino-acid polypeptide reads, in one-letter code: Cytochrome b6 (215 aa).

The helical transmembrane segment at 32-52 threads the bilayer; it reads IFYCLGGITFTSFVIQVASGF. Cys35 contributes to the heme c binding site. Positions 86 and 100 each coordinate heme b. A run of 3 helical transmembrane segments spans residues 90–110, 116–136, and 186–206; these read ASMMVLMMILHIFRVYLTGGF, LTWVTGVILSVLTVSFGVTGY, and LHTFVLPLLTAVFMLMHFLMI. Heme b-binding residues include His187 and His202.

Belongs to the cytochrome b family. PetB subfamily. The 4 large subunits of the cytochrome b6-f complex are cytochrome b6, subunit IV (17 kDa polypeptide, PetD), cytochrome f and the Rieske protein, while the 4 small subunits are PetG, PetL, PetM and PetN. The complex functions as a dimer. Heme b is required as a cofactor. Requires heme c as cofactor.

The protein localises to the plastid. It is found in the chloroplast thylakoid membrane. Functionally, component of the cytochrome b6-f complex, which mediates electron transfer between photosystem II (PSII) and photosystem I (PSI), cyclic electron flow around PSI, and state transitions. The polypeptide is Cytochrome b6 (Chaetosphaeridium globosum (Charophycean green alga)).